The sequence spans 538 residues: [Pyruvate dehydrogenase [acetyl-transferring]]-phosphatase 1, mitochondrial (538 aa).

A mitochondrion-targeting transit peptide spans 1–71; that stretch reads MPAPTQLFFP…WWQYTQGRRY (71 aa). The PPM-type phosphatase domain occupies 109 to 525; that stretch reads ILGFDSNQLP…DDITIIVVQF (417 aa). Asp-144 and Gly-145 together coordinate Mn(2+). Lys-202 bears the N6-acetyllysine mark. 2 residues coordinate Mn(2+): Asp-418 and Asp-516.

This sequence belongs to the PP2C family. In terms of assembly, heterodimer of a catalytic (PDP1) and a regulatory (PDPR) subunit. Mn(2+) serves as cofactor. The cofactor is Mg(2+).

Its subcellular location is the mitochondrion. It carries out the reaction O-phospho-L-seryl-[pyruvate dehydrogenase E1 alpha subunit] + H2O = L-seryl-[pyruvate dehydrogenase E1 alpha subunit] + phosphate. Its activity is regulated as follows. Magnesium-dependent and calcium-stimulated. PDP1 activity strongly depends on its Ca(2+)-dependent binding to the lipoyl domain of E2 subunit of component of the pyruvate dehydrogenase complex. In terms of biological role, mitochondrial enzyme that catalyzes the dephosphorylation and concomitant reactivation of the alpha subunit of the E1 component of the pyruvate dehydrogenase complex (PDC), thereby stimulating the conversion of pyruvate into acetyl-CoA. The polypeptide is [Pyruvate dehydrogenase [acetyl-transferring]]-phosphatase 1, mitochondrial (Pdp1) (Mus musculus (Mouse)).